The following is a 453-amino-acid chain: CBL-interacting protein kinase 24 (453 aa).

A Protein kinase domain is found at 18–271 (YEVGRTIGQG…IEQIREDTWF (254 aa)). ATP contacts are provided by residues 24–32 (IGQGTFAKV) and K47. D141 acts as the Proton acceptor in catalysis. Residues 159–186 (DFGLSTLAQKGVGLLHTTCGTPNYVAPE) form an activation loop region. The 27-residue stretch at 310 to 336 (NDGGPLVMNAFEMITLSQGLDLSALFD) folds into the NAF domain. Residues 343-372 (KRQTRFVSRKPAKTIVATIEVVAETMGLKV) form a PPI region.

This sequence belongs to the protein kinase superfamily. CAMK Ser/Thr protein kinase family. SNF1 subfamily. Interacts with CBL4. Mn(2+) is required as a cofactor.

It carries out the reaction L-seryl-[protein] + ATP = O-phospho-L-seryl-[protein] + ADP + H(+). The catalysed reaction is L-threonyl-[protein] + ATP = O-phospho-L-threonyl-[protein] + ADP + H(+). Involved in the regulatory pathway for the control of intracellular Na(+) and K(+) homeostasis and salt tolerance. Operates in synergy with CBL4 to activate the plasma membrane Na(+)/H(+) antiporter SOS1. CIPK serine-threonine protein kinases interact with CBL proteins. Binding of a CBL protein to the regulatory NAF domain of CIPK protein lead to the activation of the kinase in a calcium-dependent manner. The sequence is that of CBL-interacting protein kinase 24 (CIPK24) from Oryza sativa subsp. japonica (Rice).